The following is a 148-amino-acid chain: Myosin light chain 3, skeletal muscle isoform (148 aa).

N-acetylthreonine is present on Thr1. 2 EF-hand domains span residues 6–41 (DQIEDFKEAFGLFDRIGDSQVAFNQVADIMRALGQN) and 82–117 (GTYDDYVEGLRVFDKEGNGTVMGAELRIVLSTLGEK).

In terms of assembly, myosin is a hexamer of 2 heavy chains and 4 light chains.

The chain is Myosin light chain 3, skeletal muscle isoform from Chelon ramada (Thin-lipped grey mullet).